Consider the following 364-residue polypeptide: Fructose-1,6-bisphosphatase class 1 1 (364 aa).

Residues glutamate 99, aspartate 121, leucine 123, and aspartate 124 each coordinate Mg(2+). Residues 124-127 and asparagine 220 each bind substrate; that span reads DGSS. Position 292 (glutamate 292) interacts with Mg(2+).

Belongs to the FBPase class 1 family. Homotetramer. It depends on Mg(2+) as a cofactor.

The protein resides in the cytoplasm. The catalysed reaction is beta-D-fructose 1,6-bisphosphate + H2O = beta-D-fructose 6-phosphate + phosphate. It functions in the pathway carbohydrate biosynthesis; gluconeogenesis. In Albidiferax ferrireducens (strain ATCC BAA-621 / DSM 15236 / T118) (Rhodoferax ferrireducens), this protein is Fructose-1,6-bisphosphatase class 1 1.